Here is a 199-residue protein sequence, read N- to C-terminus: Putative pseudouridine methyltransferase (199 aa).

S-adenosyl-L-methionine contacts are provided by Leu132 and Cys186.

Belongs to the methyltransferase superfamily. TrmY family.

The protein resides in the cytoplasm. The polypeptide is Putative pseudouridine methyltransferase (Vibrio parahaemolyticus serotype O3:K6 (strain RIMD 2210633)).